The sequence spans 268 residues: Nickel import ATP-binding protein NikE (268 aa).

The ABC transporter domain maps to 4-252 (LNVSDLSHHY…SSDAGRVLQN (249 aa)). 45–52 (GRSGCGKS) contacts ATP.

It belongs to the ABC transporter superfamily. Nickel importer (TC 3.A.1.5.3) family. In terms of assembly, the complex is composed of two ATP-binding proteins (NikD and NikE), two transmembrane proteins (NikB and NikC) and a solute-binding protein (NikA).

The protein resides in the cell inner membrane. The catalysed reaction is Ni(2+)(out) + ATP + H2O = Ni(2+)(in) + ADP + phosphate + H(+). Its function is as follows. Part of the ABC transporter complex NikABCDE involved in nickel import. Responsible for energy coupling to the transport system. This is Nickel import ATP-binding protein NikE from Escherichia coli O6:K15:H31 (strain 536 / UPEC).